A 296-amino-acid polypeptide reads, in one-letter code: D-alanine--D-alanine ligase (296 aa).

In terms of domain architecture, ATP-grasp spans 103–293; sequence KEILMHHRMP…FDSFVKRIIE (191 aa). Residue 129 to 180 participates in ATP binding; it reads ISFPVAVKPSSGGSSIATFKVKSIQELKHAYEEASKYGEVMIEQWVTGKEIT. Mg(2+)-binding residues include Asp247, Glu260, and Asn262.

Belongs to the D-alanine--D-alanine ligase family. It depends on Mg(2+) as a cofactor. Requires Mn(2+) as cofactor.

It is found in the cytoplasm. The enzyme catalyses 2 D-alanine + ATP = D-alanyl-D-alanine + ADP + phosphate + H(+). Its pathway is cell wall biogenesis; peptidoglycan biosynthesis. In terms of biological role, cell wall formation. The sequence is that of D-alanine--D-alanine ligase from Francisella tularensis subsp. novicida (strain U112).